A 323-amino-acid polypeptide reads, in one-letter code: MTIRAVVRGVGHYLPDRVVPNSELEAIVETTDEWIRTRSGIERRHFAAEGQTTSDLAARAARAALDDAGLQPDDIDTLIVATSTADLTFPSAATMVQAALGMTRGFAFDVQAVCAGFVYALANADALIRSGQAQRVLVIGAETFSRLMDWNDRATCVLFGDGAGAVVLEGTESAGTSADRGILATDLHSDGRFKDLLYVDGGSSTGTTGHLRMQGREVFRHAVEKLAETAHTALEKAGLGAGDVDWIVPHQANLRIISATAQRMQVPMDRVILTVQDHGNTSAASIPLALSVGKARGQIKEGDLLVTEAIGGGLAWGSVVLRW.

Active-site residues include cysteine 114 and histidine 250. Residues 251 to 255 (QANLR) are ACP-binding. The active site involves asparagine 280.

The protein belongs to the thiolase-like superfamily. FabH family. As to quaternary structure, homodimer.

It localises to the cytoplasm. The catalysed reaction is malonyl-[ACP] + acetyl-CoA + H(+) = 3-oxobutanoyl-[ACP] + CO2 + CoA. The protein operates within lipid metabolism; fatty acid biosynthesis. Its function is as follows. Catalyzes the condensation reaction of fatty acid synthesis by the addition to an acyl acceptor of two carbons from malonyl-ACP. Catalyzes the first condensation reaction which initiates fatty acid synthesis and may therefore play a role in governing the total rate of fatty acid production. Possesses both acetoacetyl-ACP synthase and acetyl transacylase activities. Its substrate specificity determines the biosynthesis of branched-chain and/or straight-chain of fatty acids. The chain is Beta-ketoacyl-[acyl-carrier-protein] synthase III from Cereibacter sphaeroides (strain ATCC 17029 / ATH 2.4.9) (Rhodobacter sphaeroides).